A 201-amino-acid chain; its full sequence is Recombination protein RecR (201 aa).

The C4-type zinc finger occupies 60 to 75 (CRSCGNVDTSDPCTIC). The 96-residue stretch at 83–178 (TTLVVVEDVS…TVTRLAHGVP (96 aa)) folds into the Toprim domain.

This sequence belongs to the RecR family.

May play a role in DNA repair. It seems to be involved in an RecBC-independent recombinational process of DNA repair. It may act with RecF and RecO. This chain is Recombination protein RecR, found in Methylorubrum extorquens (strain CM4 / NCIMB 13688) (Methylobacterium extorquens).